A 177-amino-acid polypeptide reads, in one-letter code: Large ribosomal subunit protein uL10 (177 aa).

It belongs to the universal ribosomal protein uL10 family. In terms of assembly, part of the ribosomal stalk of the 50S ribosomal subunit. The N-terminus interacts with L11 and the large rRNA to form the base of the stalk. The C-terminus forms an elongated spine to which L12 dimers bind in a sequential fashion forming a multimeric L10(L12)X complex.

In terms of biological role, forms part of the ribosomal stalk, playing a central role in the interaction of the ribosome with GTP-bound translation factors. In Mycobacterium leprae (strain Br4923), this protein is Large ribosomal subunit protein uL10.